Reading from the N-terminus, the 337-residue chain is Equatorin (337 aa).

The N-terminal stretch at 1–20 (MDFILLIILSGVFLPDIISL) is a signal peptide. Over 21 to 183 (QPIVGQEPGV…LSELEEIKLK (163 aa)) the chain is Lumenal. The tract at residues 110–130 (SKPTASGEEEKPSESSRKTST) is disordered. Positions 117–126 (EEEKPSESSR) are enriched in basic and acidic residues. An N-linked (GlcNAc...) asparagine glycan is attached at asparagine 145. The chain crosses the membrane as a helical span at residues 184 to 204 (LMLGISLMTLVLLIPLLIFCF). The Cytoplasmic portion of the chain corresponds to 205 to 337 (ATLYKLRHLR…LLNKEGSPSN (133 aa)). Positions 259–283 (SSEMRRSRTRRSKSKPMDFSAGSNQ) are disordered. A Phosphoserine modification is found at serine 336.

In terms of assembly, interacts with SNAP25. Highly N- and O-glycosylated; contains sialic acid. MN9 epitope is O-glycosylated. In terms of tissue distribution, sperm specific, including germ cells (at protein level).

It localises to the cytoplasmic vesicle. Its subcellular location is the secretory vesicle. It is found in the acrosome membrane. The protein localises to the acrosome inner membrane. The protein resides in the acrosome outer membrane. It localises to the nucleus. Its subcellular location is the cytoplasm. Acrosomal membrane-anchored protein involved in the process of fertilization and in acrosome biogenesis. This is Equatorin (Eqtn) from Mus musculus (Mouse).